A 103-amino-acid polypeptide reads, in one-letter code: Histone H4 (103 aa).

A compositionally biased stretch (gly residues) spans 1–14; the sequence is MSGRGKGGKGLGKG. The tract at residues 1–20 is disordered; that stretch reads MSGRGKGGKGLGKGGAKRHR. An N-acetylserine modification is found at S2. N6-acetyl-N6-methyllysine; alternate occurs at positions 6 and 13. K17 carries the N6-acetyllysine modification. Residues 17–21 mediate DNA binding; sequence KRHRR.

The protein belongs to the histone H4 family. In terms of assembly, the nucleosome is a histone octamer containing two molecules each of H2A, H2B, H3 and H4 assembled in one H3-H4 heterotetramer and two H2A-H2B heterodimers. The octamer wraps approximately 147 bp of DNA.

Its subcellular location is the nucleus. The protein resides in the chromosome. Core component of nucleosome. Nucleosomes wrap and compact DNA into chromatin, limiting DNA accessibility to the cellular machineries which require DNA as a template. Histones thereby play a central role in transcription regulation, DNA repair, DNA replication and chromosomal stability. DNA accessibility is regulated via a complex set of post-translational modifications of histones, also called histone code, and nucleosome remodeling. In Mytilus chilensis (Chilean blue mussel), this protein is Histone H4.